The chain runs to 623 residues: AFI1-like protein C776.06c (623 aa).

One can recognise a uDENN domain in the interval 5–204 (DYLLTAIFDP…IDNIPKPGSE (200 aa)). In terms of domain architecture, cDENN spans 248–386 (ISNLINTFID…SDATTTMDTK (139 aa)). A dDENN domain is found at 388-476 (LFNNTSPFTP…WSWDNDDEKV (89 aa)).

This sequence belongs to the AFI1/mesA family.

It localises to the cytoplasm. Its subcellular location is the cell cortex. It is found in the nucleus. In terms of biological role, involved in polarity establishment. The polypeptide is AFI1-like protein C776.06c (Schizosaccharomyces pombe (strain 972 / ATCC 24843) (Fission yeast)).